The chain runs to 294 residues: MPSLKDLKNRIASVKATQKITKAMKMVAAAKLRRAQEAAEAARPYSQRMGAVLANIAKAVTDADGAPTLMTGTGQDQVHLLVVCTAERGLCGGFNSQIARFAREHVRKLVAEGKTVKIFTVGKKGYDILRREFASLIIERKELRDVKRVGFENADQIGKRIIEMYAAGEFDVCTLFYSEFKSVISQIPTAQRLIPASAEAVQAEDAEHAGAVYEYEPDPASILEDLIPRNISVQIFRALLENVAGEMGAKMSAMDNATRNAGEMINKLTLSYNRQRQAQITKELIEIISGAEAL.

This sequence belongs to the ATPase gamma chain family. F-type ATPases have 2 components, CF(1) - the catalytic core - and CF(0) - the membrane proton channel. CF(1) has five subunits: alpha(3), beta(3), gamma(1), delta(1), epsilon(1). CF(0) has three main subunits: a, b and c.

It localises to the cell inner membrane. Its function is as follows. Produces ATP from ADP in the presence of a proton gradient across the membrane. The gamma chain is believed to be important in regulating ATPase activity and the flow of protons through the CF(0) complex. In Rhizobium johnstonii (strain DSM 114642 / LMG 32736 / 3841) (Rhizobium leguminosarum bv. viciae), this protein is ATP synthase gamma chain.